A 383-amino-acid polypeptide reads, in one-letter code: Queuine tRNA-ribosyltransferase (383 aa).

D92 acts as the Proton acceptor in catalysis. Substrate is bound by residues 92-96 (DSGGF), D146, Q190, and G217. The RNA binding stretch occupies residues 248-254 (GVGKPED). Catalysis depends on D267, which acts as the Nucleophile. Residues 272–276 (TRNAR) are RNA binding; important for wobble base 34 recognition. Zn(2+) contacts are provided by C310, C312, C315, and H341.

It belongs to the queuine tRNA-ribosyltransferase family. In terms of assembly, homodimer. Within each dimer, one monomer is responsible for RNA recognition and catalysis, while the other monomer binds to the replacement base PreQ1. It depends on Zn(2+) as a cofactor.

The enzyme catalyses 7-aminomethyl-7-carbaguanine + guanosine(34) in tRNA = 7-aminomethyl-7-carbaguanosine(34) in tRNA + guanine. It participates in tRNA modification; tRNA-queuosine biosynthesis. In terms of biological role, catalyzes the base-exchange of a guanine (G) residue with the queuine precursor 7-aminomethyl-7-deazaguanine (PreQ1) at position 34 (anticodon wobble position) in tRNAs with GU(N) anticodons (tRNA-Asp, -Asn, -His and -Tyr). Catalysis occurs through a double-displacement mechanism. The nucleophile active site attacks the C1' of nucleotide 34 to detach the guanine base from the RNA, forming a covalent enzyme-RNA intermediate. The proton acceptor active site deprotonates the incoming PreQ1, allowing a nucleophilic attack on the C1' of the ribose to form the product. After dissociation, two additional enzymatic reactions on the tRNA convert PreQ1 to queuine (Q), resulting in the hypermodified nucleoside queuosine (7-(((4,5-cis-dihydroxy-2-cyclopenten-1-yl)amino)methyl)-7-deazaguanosine). The chain is Queuine tRNA-ribosyltransferase from Psychrobacter cryohalolentis (strain ATCC BAA-1226 / DSM 17306 / VKM B-2378 / K5).